The sequence spans 254 residues: Cell division protein ZapD (254 aa).

Belongs to the ZapD family. Interacts with FtsZ.

It is found in the cytoplasm. Cell division factor that enhances FtsZ-ring assembly. Directly interacts with FtsZ and promotes bundling of FtsZ protofilaments, with a reduction in FtsZ GTPase activity. In Idiomarina loihiensis (strain ATCC BAA-735 / DSM 15497 / L2-TR), this protein is Cell division protein ZapD.